Reading from the N-terminus, the 177-residue chain is Ureidoglycolate lyase (177 aa).

The protein belongs to the ureidoglycolate lyase family. In terms of assembly, homodimer. Requires Ni(2+) as cofactor.

It catalyses the reaction (S)-ureidoglycolate = urea + glyoxylate. The protein operates within nitrogen metabolism; (S)-allantoin degradation. Its function is as follows. Catalyzes the catabolism of the allantoin degradation intermediate (S)-ureidoglycolate, generating urea and glyoxylate. Involved in the utilization of allantoin as nitrogen source. This Burkholderia cepacia (Pseudomonas cepacia) protein is Ureidoglycolate lyase.